Here is a 270-residue protein sequence, read N- to C-terminus: Phospholipase A and acyltransferase 5 (270 aa).

Disordered stretches follow at residues 1–54 (MGLS…SASS) and 70–122 (RRLE…NPRP). Polar residues-rich tracts occupy residues 24–54 (TQISKTSSTESSDTQSATGQSTVPHSDSASS) and 100–116 (IPTSNSEIESTQKNQAV). Residues 127-240 (LIEIFRIGYE…LRYGVPRSQQ (114 aa)) enclose the LRAT domain. Catalysis depends on residues H137 and H149. C224 functions as the Acyl-thioester intermediate in the catalytic mechanism.

It belongs to the H-rev107 family. As to expression, isoform 4 shows highest expression level in testis.

Its subcellular location is the cytoplasm. It localises to the cytosol. The enzyme catalyses a 1,2-diacyl-sn-glycero-3-phosphocholine + H2O = a 1-acyl-sn-glycero-3-phosphocholine + a fatty acid + H(+). The catalysed reaction is a 1,2-diacyl-sn-glycero-3-phosphocholine + H2O = a 2-acyl-sn-glycero-3-phosphocholine + a fatty acid + H(+). It catalyses the reaction 1-hexadecanoyl-2-(5Z,8Z,11Z,14Z-eicosatetraenoyl)-sn-glycero-3-phosphocholine + 1,2-di-(9Z-octadecenoyl)-sn-glycero-3-phosphoethanolamine = N-(5Z,8Z,11Z,14Z-eicosatetraenoyl)-1,2-di-(9Z-octadecenoyl)-sn-glycero-3-phosphoethanolamine + 1-hexadecanoyl-sn-glycero-3-phosphocholine + H(+). It carries out the reaction 1,2-di-(9Z-octadecenoyl)-sn-glycero-3-phosphoethanolamine + 1,2-dihexadecanoyl-sn-glycero-3-phosphocholine = N-hexadecanoyl-1,2-di-(9Z-octadecenoyl)-sn-glycero-3-phosphoethanolamine + 1-hexadecanoyl-sn-glycero-3-phosphocholine + H(+). The enzyme catalyses 1,2-di-(9Z-octadecenoyl)-sn-glycero-3-phosphoethanolamine + 1,2-dihexadecanoyl-sn-glycero-3-phosphocholine = N-hexadecanoyl-1,2-di-(9Z-octadecenoyl)-sn-glycero-3-phosphoethanolamine + 2-hexadecanoyl-sn-glycero-3-phosphocholine + H(+). The catalysed reaction is a 1,2-diacyl-sn-glycero-3-phosphoethanolamine + a 1,2-diacyl-sn-glycero-3-phosphocholine = an N-acyl-1,2-diacyl-sn-glycero-3-phosphoethanolamine + a 1-acyl-sn-glycero-3-phosphocholine + H(+). It catalyses the reaction a 1,2-diacyl-sn-glycero-3-phosphoethanolamine + a 1,2-diacyl-sn-glycero-3-phosphocholine = an N-acyl-1,2-diacyl-sn-glycero-3-phosphoethanolamine + a 2-acyl-sn-glycero-3-phosphocholine + H(+). It carries out the reaction 1-hexadecanoyl-2-(9Z-octadecenoyl)-sn-glycero-3-phosphocholine + 1,2-di-(9Z-octadecenoyl)-sn-glycero-3-phosphoethanolamine = N,1,2-tri-(9Z-octadecenoyl)-sn-glycero-3-phosphoethanolamine + 1-hexadecanoyl-sn-glycero-3-phosphocholine + H(+). Its function is as follows. Exhibits both phospholipase A1/2 and acyltransferase activities. Shows phospholipase A1 (PLA1) and A2 (PLA2) activity, catalyzing the calcium-independent release of fatty acids from the sn-1 or sn-2 position of glycerophospholipids. Shows N-acyltransferase activity, catalyzing the calcium-independent transfer of a fatty acyl group at the sn-1 position of phosphatidylcholine (PC) and other glycerophospholipids to the primary amine of phosphatidylethanolamine (PE), forming N-acylphosphatidylethanolamine (NAPE), which serves as precursor for N-acylethanolamines (NAEs). The protein is Phospholipase A and acyltransferase 5 of Mus musculus (Mouse).